The primary structure comprises 236 residues: Small ribosomal subunit protein uS2c (236 aa).

It belongs to the universal ribosomal protein uS2 family.

It localises to the plastid. Its subcellular location is the chloroplast. The protein is Small ribosomal subunit protein uS2c (rps2) of Coffea arabica (Arabian coffee).